The following is a 293-amino-acid chain: MNPFWSMSTNAGRKRSDGEEQSGSGEQRASPARPPFGKKQLPSIPKNAVPITKAASPASSTQSANGTHASYGPFYLEYSLLAEFTLVIKQKLPGIYVQPSYRSALMWFGVIFIRHGLYQDGVFKFTVYIPDNYPDGDCPKVVFDTPVFHPLVDPVSGELDVRRAFTKWRRNHNHIWQVLMYARTIFYKINTMEPLNPEAAVLYDKDIQLFKSKVVDSVKLCNSHLFDQPKIDDPYAISFSPWNPAVHEEAKEKMFAHKRRPEDFNKGLPVSGLSWVKPGSTQPFSKEDNPLQT.

The segment covering 1–11 has biased composition (polar residues); the sequence is MNPFWSMSTNA. Positions 1 to 44 are disordered; it reads MNPFWSMSTNAGRKRSDGEEQSGSGEQRASPARPPFGKKQLPSI. Residues 75–223 enclose the UBC core domain; it reads YLEYSLLAEF…VVDSVKLCNS (149 aa). Residues 260 to 293 are disordered; it reads RPEDFNKGLPVSGLSWVKPGSTQPFSKEDNPLQT.

This sequence belongs to the ubiquitin-conjugating enzyme family. FTS subfamily.

It localises to the cytoplasm. Its subcellular location is the cell membrane. In terms of biological role, may function to promote vesicle trafficking and/or fusion. May also regulate apoptosis. This Danio rerio (Zebrafish) protein is AKT-interacting protein (aktip).